The sequence spans 377 residues: F-box protein At2g05970 (377 aa).

The F-box domain maps to 8 to 55 (ASWSELCPDVLRCVFELLSFSDLNRTRSVCSSWHSASRHCVPTQNQIP).

The sequence is that of F-box protein At2g05970 from Arabidopsis thaliana (Mouse-ear cress).